A 350-amino-acid chain; its full sequence is Cilia- and flagella-associated protein 36 (350 aa).

Positions 142-167 (SELEQQEMKILQEVLRRSKEEYDLQM) form a coiled coil. Disordered regions lie at residues 171–233 (GLGS…ATTA) and 301–337 (RQTG…QKRK). Residues 177-220 (LASTSSSVSETPQNPEQRLSNGVSDPLTLTQPDSEMEESSTATQ) are compositionally biased toward polar residues. A coiled-coil region spans residues 280 to 350 (VALQQRSEYL…EKLKEEVIKK (71 aa)).

The protein belongs to the CFAP36 family.

It is found in the nucleus. Its subcellular location is the cytoplasm. The protein localises to the cell projection. It localises to the cilium. The protein resides in the flagellum. This Danio rerio (Zebrafish) protein is Cilia- and flagella-associated protein 36.